The sequence spans 100 residues: Urease subunit gamma (100 aa).

Belongs to the urease gamma subunit family. In terms of assembly, heterotrimer of UreA (gamma), UreB (beta) and UreC (alpha) subunits. Three heterotrimers associate to form the active enzyme.

It localises to the cytoplasm. The catalysed reaction is urea + 2 H2O + H(+) = hydrogencarbonate + 2 NH4(+). Its pathway is nitrogen metabolism; urea degradation; CO(2) and NH(3) from urea (urease route): step 1/1. This Nostoc punctiforme (strain ATCC 29133 / PCC 73102) protein is Urease subunit gamma.